Reading from the N-terminus, the 479-residue chain is Catalase A (479 aa).

Over residues methionine 1–serine 21 the composition is skewed to polar residues. The disordered stretch occupies residues methionine 1–arginine 25. Catalysis depends on residues histidine 53 and asparagine 126. Tyrosine 336 lines the heme pocket. The interval glutamine 350 to serine 376 is disordered. A compositionally biased stretch (polar residues) spans asparagine 361–serine 376.

It belongs to the catalase family. Heme serves as cofactor.

The catalysed reaction is 2 H2O2 = O2 + 2 H2O. Activated by peroxide. Functionally, the major expressed catalase protein in strain Corvallis in stationary phase. Decomposes hydrogen peroxide into water and oxygen; serves to protect cells from the toxic effects of hydrogen peroxide. This Pseudomonas putida (Arthrobacter siderocapsulatus) protein is Catalase A (katA).